The chain runs to 278 residues: MSISPQEVKKLRDATGAGFGDCKKALSVAGGDFELAKKKLKEMGIVSADKRSGRDAKEGRVFSYVNTERVGLLLIACETDFVAMNSDFVAFGNSLIKQLVESGRDILDEHQELEIKNLAATIKENIYVSKVYISNIASNELVKNYLHGDHSKIGVFVKFKIDDVLKMQDEKLNNFAMDLALHVAAFSPLYLSVNDICLNYIKEQEEIFMRQMESSGKPENVVKGIISGKLKKHLGEIALLEQGFVKDDKLTVKEKIEEVSKLILSKIEVVEFKYLSVG.

Positions 79–82 are involved in Mg(2+) ion dislocation from EF-Tu; that stretch reads TDFV.

The protein belongs to the EF-Ts family.

It is found in the cytoplasm. Its function is as follows. Associates with the EF-Tu.GDP complex and induces the exchange of GDP to GTP. It remains bound to the aminoacyl-tRNA.EF-Tu.GTP complex up to the GTP hydrolysis stage on the ribosome. This chain is Elongation factor Ts, found in Borrelia duttonii (strain Ly).